An 815-amino-acid polypeptide reads, in one-letter code: Probable E3 ubiquitin-protein ligase hulA (815 aa).

Residues 1–112 (MGSNLPSQPN…EMGGDEMLTR (112 aa)) form the C2 domain. Disordered stretches follow at residues 134 to 237 (NLST…GWER) and 253 to 353 (RTTT…YFVD). Low complexity-rich tracts occupy residues 165-185 (ASAA…SNPS) and 202-212 (APGAAAGATPT). Composition is skewed to polar residues over residues 213 to 226 (NTQG…SFED) and 253 to 270 (RTTT…QTQR). Residues 229–262 (GRLPAGWERREDNLGRTYYVDHNTRTTTWTRPSS) enclose the WW 1 domain. A compositionally biased stretch (basic and acidic residues) spans 279-294 (LERRAHQSRMLPEDRT). Residues 295-308 (GANSPNLPETSQQA) show a composition bias toward polar residues. Residues 324-333 (ATGATTAGTG) show a composition bias toward low complexity. WW domains are found at residues 333–366 (GELP…DPRR) and 393–426 (GPLP…DPRL). The HECT domain maps to 482–815 (SASDLKKRLM…VEETLGFGQE (334 aa)). Cys783 serves as the catalytic Glycyl thioester intermediate.

This sequence belongs to the RSP5/NEDD4 family. Interacts with creD.

It is found in the cytoplasm. The catalysed reaction is S-ubiquitinyl-[E2 ubiquitin-conjugating enzyme]-L-cysteine + [acceptor protein]-L-lysine = [E2 ubiquitin-conjugating enzyme]-L-cysteine + N(6)-ubiquitinyl-[acceptor protein]-L-lysine.. The protein operates within protein modification; protein ubiquitination. Functionally, E3 ubiquitin-protein ligase which accepts ubiquitin from an E2 ubiquitin-conjugating enzyme in the form of a thioester and then directly transfers the ubiquitin to targeted substrates. Probably involved in the regulatory network controlling carbon source utilization. The sequence is that of Probable E3 ubiquitin-protein ligase hulA (hulA) from Aspergillus clavatus (strain ATCC 1007 / CBS 513.65 / DSM 816 / NCTC 3887 / NRRL 1 / QM 1276 / 107).